The sequence spans 121 residues: Glycine cleavage system H protein (121 aa).

A Lipoyl-binding domain is found at 16-98; it reads VATIGITAHA…EAGGWFAKVR (83 aa). K57 bears the N6-lipoyllysine mark.

It belongs to the GcvH family. The glycine cleavage system is composed of four proteins: P, T, L and H. (R)-lipoate is required as a cofactor.

In terms of biological role, the glycine cleavage system catalyzes the degradation of glycine. The H protein shuttles the methylamine group of glycine from the P protein to the T protein. This Phenylobacterium zucineum (strain HLK1) protein is Glycine cleavage system H protein.